A 500-amino-acid chain; its full sequence is Glutamate--tRNA ligase (500 aa).

The 'HIGH' region signature appears at 12–22 (PSPTGHLHIGN). The 'KMSKS' region signature appears at 259–263 (KLSKR). Lys262 serves as a coordination point for ATP.

Belongs to the class-I aminoacyl-tRNA synthetase family. Glutamate--tRNA ligase type 1 subfamily. In terms of assembly, monomer.

The protein resides in the cytoplasm. It catalyses the reaction tRNA(Glu) + L-glutamate + ATP = L-glutamyl-tRNA(Glu) + AMP + diphosphate. Functionally, catalyzes the attachment of glutamate to tRNA(Glu) in a two-step reaction: glutamate is first activated by ATP to form Glu-AMP and then transferred to the acceptor end of tRNA(Glu). The sequence is that of Glutamate--tRNA ligase from Lactobacillus delbrueckii subsp. bulgaricus.